Consider the following 361-residue polypeptide: Microtubule-associated protein Jupiter (361 aa).

Residues 1 to 15 show a composition bias toward polar residues; the sequence is MISNYDITDSKSSSK. Disordered regions lie at residues 1 to 38 and 70 to 99; these read MISN…TPRN and IGDN…TPGK. Position 24 is a phosphoserine (Ser24). Thr35 carries the phosphothreonine modification. The span at 73-87 shows a compositional bias: basic and acidic residues; the sequence is NPRRGQKPVDSHSRL. Thr96 carries the post-translational modification Phosphothreonine. Ser105 is subject to Phosphoserine. Composition is skewed to low complexity over residues 125-134 and 141-154; these read GSSTANTTNG and SGSV…VSSS. Disordered regions lie at residues 125-165 and 328-361; these read GSST…SGSR and GSTN…SGLW. Residues Ser143 and Ser154 each carry the phosphoserine modification. Positions 155–165 are enriched in polar residues; sequence TENLKMNSGSR.

The protein belongs to the MAP Jupiter family.

The protein resides in the nucleus. It localises to the cytoplasm. Its subcellular location is the cytoskeleton. The protein localises to the spindle. In terms of biological role, binds to all microtubule populations. The polypeptide is Microtubule-associated protein Jupiter (Drosophila persimilis (Fruit fly)).